The following is a 64-amino-acid chain: Large ribosomal subunit protein bL32 (64 aa).

The interval 1 to 35 (MAVQKSRVTPSRRGQRRSHDALTAKQLSTDPTSGE) is disordered.

The protein belongs to the bacterial ribosomal protein bL32 family.

The polypeptide is Large ribosomal subunit protein bL32 (Xanthomonas campestris pv. campestris (strain 8004)).